The following is a 250-amino-acid chain: Exosome complex component Rrp41 (250 aa).

The protein belongs to the RNase PH family. Rrp41 subfamily. As to quaternary structure, component of the archaeal exosome complex. Forms a hexameric ring-like arrangement composed of 3 Rrp41-Rrp42 heterodimers. The hexameric ring associates with a trimer of Rrp4 and/or Csl4 subunits.

The protein resides in the cytoplasm. Its function is as follows. Catalytic component of the exosome, which is a complex involved in RNA degradation. Has 3'-&gt;5' exoribonuclease activity. Can also synthesize heteromeric RNA-tails. The chain is Exosome complex component Rrp41 from Pyrococcus furiosus (strain ATCC 43587 / DSM 3638 / JCM 8422 / Vc1).